Consider the following 219-residue polypeptide: Transmembrane emp24 domain-containing protein 10 (219 aa).

The first 31 residues, M1–G31, serve as a signal peptide directing secretion. The segment at M1 to E142 is required for interaction with STX17. Residues I32 to R185 lie on the Lumenal side of the membrane. The region spanning R41–S193 is the GOLD domain. Residues L147–T178 are required for TMED10 and TMED2 cis-Golgi network localization. 2 positions are modified to dimethylated arginine: R171 and R176. An N-linked (GlcNAc...) asparagine glycan is attached at N179. Residues V186–F206 traverse the membrane as a helical segment. The interaction with COPG1 stretch occupies residues Q204 to E219. Over Y207–E219 the chain is Cytoplasmic. Residues Y207–E219 are interaction with ARF1 and IL1B. Positions F211 to F212 match the COPII vesicle coat-binding motif. The short motif at F211 to E219 is the COPI vesicle coat-binding element.

This sequence belongs to the EMP24/GP25L family. As to quaternary structure, predominantly dimeric and to a lesser extent monomeric in the ER. Monomer and dimer in ERGIC and cis-Golgi network. Forms homooligomer (via GOLD domain); the assembly is promoted by direct binding with leaderless cargos and may form a protein channel that facilitates cargo entry into the ERGIC. Forms heterooligomeric complexes with other members of the p24 family such as TMED2, TMED7 and TMED9. Interacts (via GOLD domain) with TMED2 (via GOLD domain); the complex is required for export of TMED10 from the ER to the cis-Golgi network; the complex is proposed to be involved in cis-Golgi network dynamics and / or biogenesis. Associates with the COPI vesicle coat subunits (coatomer). Tetramerization of the cytoplasmic domain at the Golgi membrane in vitro; the complex is proposed to interact with COPI coatomer and induce budding of the vesicles. Interacts with COPG1; the interaction involves TMED10 homodimer. Interacts with ARF1 (GDP-bound); the interaction probably involves a TMED10 oligomer. Interacts with SEC23A, SEC24B, SEC24C and SEC24D components of the coat protein complex II/COPII, indicative of an association of TMED10 with the COPII vesicle coat. Interacts with CD59. Interacts with MPPE1/PGAP5; the complex might recruit and sort GPI-anchored proteins to the ER-exit site, or the interaction might lead to recycling of PGAP5 between the ER and the Golgi. Interacts with F2LR1/PAR2. Interacts with KDELR2/ERD2; the interaction is disrupted by KDELR2 ligand. Found in a complex composed at least of SURF4, TMED2 and TMED10. Associates with the presenilin-dependent gamma-secretase complex. Interacts with STX17; the interaction is direct. Interacts with IL-1; the interaction is direct. Interacts with RAB21 (active GTP-bound form); the interaction is indirect and regulates TMED10 abundance and localization at the Golgi. In terms of tissue distribution, ubiquitous.

Its subcellular location is the endoplasmic reticulum membrane. It localises to the endoplasmic reticulum-Golgi intermediate compartment membrane. The protein localises to the golgi apparatus membrane. The protein resides in the golgi apparatus. It is found in the cis-Golgi network membrane. Its subcellular location is the trans-Golgi network membrane. It localises to the cytoplasmic vesicle. The protein localises to the secretory vesicle membrane. The protein resides in the cell membrane. It is found in the melanosome. Its function is as follows. Cargo receptor involved in protein vesicular trafficking and quality control in the endoplasmic reticulum (ER) and Golgi. The p24 protein family is a group of transmembrane proteins that bind coat protein complex I/COPI and coat protein complex II/COPII involved in vesicular trafficking between the membranes. Acts at the lumenal side for incorporation of secretory cargo molecules into transport vesicles and involved in vesicle coat formation at the cytoplasmic side. Mainly functions in the early secretory pathway and cycles between the ER, ER-Golgi intermediate compartment (ERGIC) and Golgi, mediating cargo transport through COPI and COPII-coated vesicles. In COPII vesicle-mediated anterograde transport, involved in the transport of GPI-anchored proteins by acting together with TMED2 as their cargo receptor; the function specifically implies SEC24C and SEC24D of the COPII vesicle coat and lipid raft-like microdomains of the ER. Recognizes GPI anchors structural remodeled in the ER by the GPI inositol-deacylase/PGAP1 and the metallophosphoesterase MPPE1/PGAP5. In COPI vesicle-mediated retrograde transport, involved in the biogenesis of COPI vesicles and vesicle coat recruitment. Involved in trafficking of amyloid beta A4 protein and soluble APP-beta release (independent from the modulation of gamma-secretase activity). Involved in the KDELR2-mediated retrograde transport of the toxin A subunit (CTX-A-K63)together with COPI and the COOH terminus of KDELR2. On Golgi membranes, acts as a primary receptor for ARF1-GDP, a GTP-binding protein involved in COPI-vesicle formation. Increases coatomer-dependent GTPase-activating activity of ARFGAP2 which mediates the hydrolysis of ARF1-bound GTP and therefore modulates protein trafficking from the Golgi apparatus. Involved in the exocytic trafficking of G protein-coupled receptors F2LR1/PAR2 (trypsin and tryspin-like enzyme receptor), OPRM1 (opioid receptor) and P2RY4 (UTD and UDP receptor) from the Golgi to the plasma membrane, thus contributing to receptor resensitization. In addition to its cargo receptor activity, may also act as a protein channel after oligomerization, facilitating the post-translational entry of leaderless cytoplasmic cargo into the ERGIC. Involved in the translocation into ERGIC, the vesicle entry and the secretion of leaderless cargos (lacking the secretion signal sequence), including the mature form of interleukin 1/IL-1 family members, the alpha-crystallin B chain HSPB5, the carbohydrate-binding proteins galectin-1/LGALS1 and galectin-3/LGALS3, the microtubule-associated protein Tau/MAPT, and the annexin A1/ANXA1; the translocation process is dependent on cargo protein unfolding and enhanced by chaperones HSP90AB1 and HSP90B1/GRP9. Could also associates with the presenilin-dependent gamma-secretase complex in order to regulate gamma-cleavages of the amyloid beta A4 protein to yield amyloid-beta 40/Abeta40. The protein is Transmembrane emp24 domain-containing protein 10 of Rattus norvegicus (Rat).